The following is a 224-amino-acid chain: uncharacterized protein (224 aa).

The signal sequence occupies residues 1–19; that stretch reads MLRHITFTVFITTSMNTLA.

Belongs to the periplasmic pilus chaperone family.

The protein localises to the periplasm. Functionally, could be required for the biogenesis of a putative fimbria. This is an uncharacterized protein from Escherichia coli (strain K12).